Consider the following 66-residue polypeptide: Small vasohibin-binding protein (66 aa).

Basic and acidic residues predominate over residues 1–23 (MDPPARKEKSKVKEPAFRVEKAK). The interval 1 to 30 (MDPPARKEKSKVKEPAFRVEKAKQKSAQQE) is disordered. The stretch at 5-52 (ARKEKSKVKEPAFRVEKAKQKSAQQELKQRQRAEIYALNRVMTELEQQ) forms a coiled coil.

Belongs to the SVBP family. Interacts with VASH1 and VASH2. As to expression, highly expressed in bone marrow, spleen and testis.

Its subcellular location is the cytoplasm. It is found in the secreted. It localises to the cytoskeleton. Its function is as follows. Enhances the tyrosine carboxypeptidase activity of VASH1 and VASH2, thereby promoting the removal of the C-terminal tyrosine residue of alpha-tubulin. Also required to enhance the solubility and secretion of VASH1 and VASH2. Plays a role in axon and excitatory synapse formation. The polypeptide is Small vasohibin-binding protein (Mus musculus (Mouse)).